The chain runs to 379 residues: Alternative oxidase 1, mitochondrial (379 aa).

Over residues Thr33 to Thr50 the composition is skewed to low complexity. The disordered stretch occupies residues Thr33–Lys76. Fe cation is bound by residues Glu180, Glu219, and His222. The helical transmembrane segment at Trp234–Leu256 threads the bilayer. Residues Glu270, Glu271, Glu326, and His329 each contribute to the Fe cation site.

The protein belongs to the alternative oxidase family. The cofactor is Fe cation.

It is found in the mitochondrion inner membrane. Catalyzes cyanide-resistant oxygen consumption. May increase respiration when the cytochrome respiratory pathway is restricted, or in response to low temperatures. This is Alternative oxidase 1, mitochondrial (AOX1) from Candida albicans (Yeast).